A 310-amino-acid polypeptide reads, in one-letter code: M1-specific T cell receptor beta chain (310 aa).

The first 21 residues, 1–21 (MSNQVLCCVVLCLLGANTVDG), serve as a signal peptide directing secretion. A t cell receptor beta variable 19 region spans residues 22–114 (GITQSPKYLF…TAFYLCASSI (93 aa)). The Ig-like V-type domain occupies 34-131 (EGQNVTLSCE…FGPGTRLTVT (98 aa)). Residue Asn37 is glycosylated (N-linked (GlcNAc...) asparagine). Cys42 and Cys110 form a disulfide bridge. A CDR1 region spans residues 46–50 (LNHDA). An a peptide antigen-binding site is contributed by Asp49. Residues 68–73 (SQIVND) form a CDR2 region. Residues 110–122 (CASSIRSSYEQYF) form a CDR3 region. Positions 117–131 (SYEQYFGPGTRLTVT) are t cell receptor beta joining 2-7. The segment at 133–310 (DLKNVFPPKV…AMVKRKDSRG (178 aa)) is t cell receptor beta constant 2. Positions 140–249 (PKVAVFEPSE…WTQDRAKPVT (110 aa)) constitute an Ig-like C1-type domain. Cys162 and Cys227 are oxidised to a cystine. Asn201 is a glycosylation site (N-linked (GlcNAc...) asparagine). The interval 262 to 276 (CGFTSESYQQGVLSA) is connecting peptide. Residues 277–299 (TILYEILLGKATLYAVLVSALVL) form a helical membrane-spanning segment. Over 300–310 (MAMVKRKDSRG) the chain is Cytoplasmic.

As to quaternary structure, disulfide-linked heterodimer with TRAV27*01J42*01C*01 alpha chain. The TR primarily interacts via its CDR3-beta domain with M/matrix protein 1-derived peptide (GILGFVFTL) displayed by HLA-A*02.01 in a 'peg-notch' recognition mode. The alpha-beta TR associates with the transmembrane signaling CD3 coreceptor proteins to form the TR-CD3 (TCR). The assembly of alpha-beta TR heterodimers with CD3 occurs in the endoplasmic reticulum where a single alpha-beta TR heterodimer associates with one CD3D-CD3E heterodimer, one CD3G-CD3E heterodimer and one CD247 homodimer forming a stable octameric structure. CD3D-CD3E and CD3G-CD3E heterodimers preferentially associate with TR alpha and TR beta chains (via TM domain), respectively. The association of the CD247 homodimer is the last step of TCR assembly in the endoplasmic reticulum and is required for transport to the cell surface. In terms of tissue distribution, expressed in M/matrix protein 1-specific effector memory CD8-positive T cells readily detectable in the peripheral blood, secondary lymphoid organs and lung (primary site of infection) of IAV infected individuals.

It localises to the cell membrane. In terms of biological role, the beta chain of TRAV27*01J42*01C*01/TRBV19*01J2S7*01C*02 alpha-beta T cell receptor (TR) clonotype that is specific for HLA-A*02:01-restricted M/matrix protein 1 immunodominant epitope GILGFVFTL of influenza A virus (IAV). Classified as a public TCR clonotype, it is preferentially selected in effector memory CD8-positive T cells among multiple HLA-A*02:01 carriers/individuals and confers long-lived immunity against IAV infection. Can cross-recognize sporadically emerging IAV variants by molecular mimicry, inducing immunity toward different influenza strains. Antigen recognition initiates TR-CD3 clustering on the cell surface and intracellular activation of LCK that phosphorylates the ITAM motifs of CD3G, CD3D, CD3E and CD247 enabling the recruitment of ZAP70. In turn, ZAP70 phosphorylates LAT, which recruits numerous signaling molecules to form the LAT signalosome. The LAT signalosome propagates signal branching to three major signaling pathways, the calcium, the mitogen-activated protein kinase (MAPK) kinase and the nuclear factor NF-kappa-B (NF-kB) pathways, leading to the mobilization of transcription factors that are critical for gene expression and essential for T cell differentiation into effector/memory T cells. This chain is M1-specific T cell receptor beta chain, found in Homo sapiens (Human).